Reading from the N-terminus, the 59-residue chain is Dimethylamine corrinoid protein (59 aa).

The region spanning 1–59 (TLQGQKDVIELLKEEGLRDKIKVMVGGAPATQAWADKIGADCYAENASEAVAKAKELLA) is the B12-binding domain.

Belongs to the methylamine corrinoid protein family.

The protein operates within one-carbon metabolism; methanogenesis from dimethylamine. Functionally, acts as a methyl group carrier between MtbB and MtbA. The protein is Dimethylamine corrinoid protein (mtbC) of Methanosarcina thermophila.